A 416-amino-acid chain; its full sequence is MSKRYLFTSESVTEGHPDKICDQISDTILDALLSQDDHSRVAAEVVVNTGLVLITGEITSKAQVHFVDLVRKKIAEIGYINADNGFSSNSCTVLVALDEQSPDISQGVTAAQENRELLSNDELDKIGAGDQGIVFGFACNETPEFMPLPISLAHRIARRLAAVRKTGELSYLRPDGKTQVSVIYEDGRPVGIDTILVSTQHDATIGDITDNDLVQQKIKSDLWEAVVQPVFSDLEIKPDANTRYLVNPTGKFVIGGPQGDAGLTGRKIIVDTYGGYSRHGGGAFSGKDPTKVDRSAAYACRYVAKNIVAAGLADKCEIQVGYAIGVARPVSLFVETFGTGKVADDVILDLINKYFELRPAGIIQTFNLRGLPSERGERFYQDVAAYGHFGRNDLDLPWEQTDKAAILKEALTSAVV.

An ATP-binding site is contributed by histidine 16. Aspartate 18 is a binding site for Mg(2+). Glutamate 44 lines the K(+) pocket. L-methionine contacts are provided by glutamate 57 and glutamine 100. Positions 100–110 (QSPDISQGVTA) are flexible loop. Residues 175 to 177 (DGK), 251 to 252 (KF), aspartate 260, 266 to 267 (RK), alanine 283, and lysine 287 each bind ATP. Residue aspartate 260 participates in L-methionine binding. Lysine 291 is an L-methionine binding site.

The protein belongs to the AdoMet synthase family. In terms of assembly, homotetramer; dimer of dimers. The cofactor is Mg(2+). Requires K(+) as cofactor.

Its subcellular location is the cytoplasm. The enzyme catalyses L-methionine + ATP + H2O = S-adenosyl-L-methionine + phosphate + diphosphate. It participates in amino-acid biosynthesis; S-adenosyl-L-methionine biosynthesis; S-adenosyl-L-methionine from L-methionine: step 1/1. Its function is as follows. Catalyzes the formation of S-adenosylmethionine (AdoMet) from methionine and ATP. The overall synthetic reaction is composed of two sequential steps, AdoMet formation and the subsequent tripolyphosphate hydrolysis which occurs prior to release of AdoMet from the enzyme. The protein is S-adenosylmethionine synthase of Microcystis aeruginosa (strain NIES-843 / IAM M-2473).